The primary structure comprises 775 residues: Lon protease (775 aa).

The 202-residue stretch at 6–207 (LPLMALRDIV…TIINILTSNI (202 aa)) folds into the Lon N-terminal domain. 356-363 (GPPGVGKT) provides a ligand contact to ATP. A Lon proteolytic domain is found at 592 to 773 (NDQIGSTTGL…DQVLEHALTK (182 aa)). Residues S679 and K722 contribute to the active site.

The protein belongs to the peptidase S16 family. In terms of assembly, homohexamer. Organized in a ring with a central cavity.

The protein resides in the cytoplasm. The catalysed reaction is Hydrolysis of proteins in presence of ATP.. In terms of biological role, ATP-dependent serine protease that mediates the selective degradation of mutant and abnormal proteins as well as certain short-lived regulatory proteins. Required for cellular homeostasis and for survival from DNA damage and developmental changes induced by stress. Degrades polypeptides processively to yield small peptide fragments that are 5 to 10 amino acids long. Binds to DNA in a double-stranded, site-specific manner. This Rickettsia bellii (strain RML369-C) protein is Lon protease.